A 334-amino-acid polypeptide reads, in one-letter code: Formamidase (334 aa).

In terms of domain architecture, CN hydrolase spans 14-260 (FLVAAIQFPV…WEIVTGEIYP (247 aa)). Glu-60 acts as the Proton acceptor in catalysis. Lys-133 functions as the Proton donor in the catalytic mechanism. Residue Cys-166 is the Nucleophile of the active site.

This sequence belongs to the carbon-nitrogen hydrolase superfamily. Aliphatic amidase family.

It catalyses the reaction formamide + H2O = formate + NH4(+). Is an aliphatic amidase with a restricted substrate specificity, as it only hydrolyzes formamide. This Helicobacter pylori (strain J99 / ATCC 700824) (Campylobacter pylori J99) protein is Formamidase.